The sequence spans 403 residues: Queuine tRNA-ribosyltransferase catalytic subunit 1 (403 aa).

An N-acetylalanine modification is found at Ala2. Asp105 (proton acceptor) is an active-site residue. Asp105 to Phe109 is a queuine binding site. At Ser139 the chain carries Phosphoserine. Queuine-binding residues include Asp159, Gln202, and Gly229. Positions Gly260 to Asp266 are RNA binding. Catalysis depends on Asp279, which acts as the Nucleophile. The segment at Thr284–Arg288 is RNA binding; important for wobble base 34 recognition. Residues Cys317, Cys319, Cys322, and His348 each contribute to the Zn(2+) site.

Belongs to the queuine tRNA-ribosyltransferase family. In terms of assembly, heterodimer of a catalytic subunit QTRT1 and an accessory subunit QTRT2. Zn(2+) serves as cofactor. Expressed in brain, heart, kidney, liver, ling, skeletal muscle, spleen and testis.

It localises to the cytoplasm. The protein localises to the mitochondrion outer membrane. The protein resides in the nucleus. The catalysed reaction is guanosine(34) in tRNA + queuine = queuosine(34) in tRNA + guanine. In terms of biological role, catalytic subunit of the queuine tRNA-ribosyltransferase (TGT) that catalyzes the base-exchange of a guanine (G) residue with queuine (Q) at position 34 (anticodon wobble position) in tRNAs with GU(N) anticodons (tRNA-Asp, -Asn, -His and -Tyr), resulting in the hypermodified nucleoside queuosine (7-(((4,5-cis-dihydroxy-2-cyclopenten-1-yl)amino)methyl)-7-deazaguanosine). Catalysis occurs through a double-displacement mechanism. The nucleophile active site attacks the C1' of nucleotide 34 to detach the guanine base from the RNA, forming a covalent enzyme-RNA intermediate. The proton acceptor active site deprotonates the incoming queuine, allowing a nucleophilic attack on the C1' of the ribose to form the product. Modification of cytoplasmic tRNAs with queuosine controls the elongation speed of cognate codons, thereby ensuring the correct folding of nascent proteins to maintain proteome integrity. This is Queuine tRNA-ribosyltransferase catalytic subunit 1 from Mus musculus (Mouse).